The primary structure comprises 520 residues: Cell adhesion molecule CEACAM2 (520 aa).

The N-terminal stretch at 1 to 34 (MELASAHLHKGQVPWFGLLLTASLLASWSPPTTA) is a signal peptide. The 107-residue stretch at 35–141 (QVTVMAFPLH…RVLTGQFHVH (107 aa)) folds into the Ig-like V-type domain. The Extracellular portion of the chain corresponds to 35 to 422 (QVTVMAFPLH…IFDSTYDISD (388 aa)). N-linked (GlcNAc...) asparagine glycosylation is found at Asn87, Asn104, Asn148, Asn152, Asn175, Asn199, Asn206, Asn210, Asn226, Asn258, Asn290, Asn294, Asn304, Asn317, Asn333, and Asn361. 3 consecutive Ig-like C2-type domains span residues 145–234 (LKSN…FSLN), 239–319 (PDTP…KNIT), and 327–411 (PSLQ…IKLE). Cys167 and Cys217 form a disulfide bridge. Cys261 and Cys301 are joined by a disulfide. Cysteines 346 and 394 form a disulfide. Residues 423 to 443 (VPIAVIITGAVAGVILIAGLA) traverse the membrane as a helical segment. The Cytoplasmic segment spans residues 444-520 (YRLCSRKSRW…ETVYSEVKKK (77 aa)). A disordered region spans residues 457-520 (QRDLTEHKPS…ETVYSEVKKK (64 aa)). Residues 466-480 (SASNHNLAPSDNSPN) are compositionally biased toward polar residues. Tyr487 carries the phosphotyrosine modification. Residues 490 to 513 (LNFNSQQPNRPTSAPSSPRATETV) show a composition bias toward polar residues. Ser502 is modified (phosphoserine). At Tyr514 the chain carries Phosphotyrosine.

This sequence belongs to the immunoglobulin superfamily. CEA family. As to quaternary structure, interacts weakly with MHV spike protein in tissue culture. Isoform 2 is detected in elongating spermatids within the seminiferous epithelium (at protein level). Expressed in kidney, colon, uterus, gut mononuclear cells, crypt epithelia of intestinal tissues, and to a lesser extent, in spleen. Expressed in brain including VMH, globus pallidus, ventral pallidum, striatum, olfactory bulb and hippocampus. Also detected in rectal carcinoma cell line CMT93. Isoform 2 and isoform 3 are expressed in testis. Isoform 2 is detected in seminiferous tubule, not detected in epididymal spermatozoa. Also not observed on spermatogonia, spermatocytes, round spermatids or somatic Sertoli cells. During stages I-VII of spermatogenesis, detected on the elongating spermatids. At spermiation (stage VIII) and subsequent stages IX-XII, levels are drastically reduced or absent in the seminiferous tubules. Sometimes weakly detected in the apical region of stage-VIII seminiferous epithelium. Isoform 2 level is very low in stomach, kidney, intestine, liver and spleen.

It is found in the cell membrane. Functionally, controls energy balance and peripheral insulin action. Involved in the regulation of feeding behavior particularly in the ventromedial nucleus of hypothalamus (VMH) regulation of food intake. Has a role in the regulation of metabolic rate and insulin sensitivity or resistance via effects on brown adipogenesis, sympathetic nervous outflow to brown adipose tissue, spontaneous activity and energy expenditure in skeletal muscle. In case of murine coronavirus (MHV) infection, does probably not serve as functional receptor for the virus. Isoform 2 may be an adhesion molecule contributing to cell to cell adhesion between elongating spermatids and Sertoli cells within the seminiferous epithelium. The chain is Cell adhesion molecule CEACAM2 from Mus musculus (Mouse).